The primary structure comprises 92 residues: Small ribosomal subunit protein uS19 (92 aa).

This sequence belongs to the universal ribosomal protein uS19 family.

Its function is as follows. Protein S19 forms a complex with S13 that binds strongly to the 16S ribosomal RNA. This is Small ribosomal subunit protein uS19 from Desulfatibacillum aliphaticivorans.